The following is a 337-amino-acid chain: Ribosomal RNA small subunit methyltransferase H (337 aa).

S-adenosyl-L-methionine is bound by residues 45–47 (GGH), Asp-64, Phe-91, Asp-120, and Gln-127.

The protein belongs to the methyltransferase superfamily. RsmH family.

The protein resides in the cytoplasm. The catalysed reaction is cytidine(1402) in 16S rRNA + S-adenosyl-L-methionine = N(4)-methylcytidine(1402) in 16S rRNA + S-adenosyl-L-homocysteine + H(+). Its function is as follows. Specifically methylates the N4 position of cytidine in position 1402 (C1402) of 16S rRNA. The chain is Ribosomal RNA small subunit methyltransferase H from Corynebacterium glutamicum (strain ATCC 13032 / DSM 20300 / JCM 1318 / BCRC 11384 / CCUG 27702 / LMG 3730 / NBRC 12168 / NCIMB 10025 / NRRL B-2784 / 534).